We begin with the raw amino-acid sequence, 87 residues long: Small ribosomal subunit protein bS21 (87 aa).

Positions 47–63 (YEKPSEKRARQKAEAVR) are enriched in basic and acidic residues. A disordered region spans residues 47 to 87 (YEKPSEKRARQKAEAVRRARKLARKRAQREGLLPMPKKPGR). Basic residues predominate over residues 64-73 (RARKLARKRA).

It belongs to the bacterial ribosomal protein bS21 family.

The polypeptide is Small ribosomal subunit protein bS21 (Caulobacter vibrioides (strain ATCC 19089 / CIP 103742 / CB 15) (Caulobacter crescentus)).